The following is a 218-amino-acid chain: Imidazole glycerol phosphate synthase subunit HisH (218 aa).

The Glutamine amidotransferase type-1 domain occupies 1–213 (MTTIIDYGIG…AALPTTEEAG (213 aa)). C79 acts as the Nucleophile in catalysis. Residues H188 and E190 contribute to the active site.

As to quaternary structure, heterodimer of HisH and HisF.

It is found in the cytoplasm. It catalyses the reaction 5-[(5-phospho-1-deoxy-D-ribulos-1-ylimino)methylamino]-1-(5-phospho-beta-D-ribosyl)imidazole-4-carboxamide + L-glutamine = D-erythro-1-(imidazol-4-yl)glycerol 3-phosphate + 5-amino-1-(5-phospho-beta-D-ribosyl)imidazole-4-carboxamide + L-glutamate + H(+). The catalysed reaction is L-glutamine + H2O = L-glutamate + NH4(+). It functions in the pathway amino-acid biosynthesis; L-histidine biosynthesis; L-histidine from 5-phospho-alpha-D-ribose 1-diphosphate: step 5/9. Functionally, IGPS catalyzes the conversion of PRFAR and glutamine to IGP, AICAR and glutamate. The HisH subunit catalyzes the hydrolysis of glutamine to glutamate and ammonia as part of the synthesis of IGP and AICAR. The resulting ammonia molecule is channeled to the active site of HisF. In Salinibacter ruber (strain DSM 13855 / M31), this protein is Imidazole glycerol phosphate synthase subunit HisH.